The following is a 194-amino-acid chain: NADH-quinone oxidoreductase subunit B 1 (194 aa).

Residues Cys-47, Cys-48, Cys-113, and Cys-142 each coordinate [4Fe-4S] cluster.

It belongs to the complex I 20 kDa subunit family. As to quaternary structure, NDH-1 is composed of 14 different subunits. Subunits NuoB, C, D, E, F, and G constitute the peripheral sector of the complex. The cofactor is [4Fe-4S] cluster.

The protein localises to the cell inner membrane. The enzyme catalyses a quinone + NADH + 5 H(+)(in) = a quinol + NAD(+) + 4 H(+)(out). Functionally, NDH-1 shuttles electrons from NADH, via FMN and iron-sulfur (Fe-S) centers, to quinones in the respiratory chain. The immediate electron acceptor for the enzyme in this species is believed to be ubiquinone. Couples the redox reaction to proton translocation (for every two electrons transferred, four hydrogen ions are translocated across the cytoplasmic membrane), and thus conserves the redox energy in a proton gradient. The sequence is that of NADH-quinone oxidoreductase subunit B 1 from Sorangium cellulosum (strain So ce56) (Polyangium cellulosum (strain So ce56)).